Here is a 150-residue protein sequence, read N- to C-terminus: Small ribosomal subunit protein eS19 (150 aa).

It belongs to the eukaryotic ribosomal protein eS19 family. Part of the 30S ribosomal subunit.

Its function is as follows. May be involved in maturation of the 30S ribosomal subunit. The protein is Small ribosomal subunit protein eS19 of Thermoplasma volcanium (strain ATCC 51530 / DSM 4299 / JCM 9571 / NBRC 15438 / GSS1).